Consider the following 674-residue polypeptide: L-type lectin-domain containing receptor kinase IV.3 (674 aa).

The signal sequence occupies residues 1-22; the sequence is MFFKLFTIFFFFIILLSKPLNS. Residues Asn-21, Asn-28, Asn-40, Asn-81, Asn-136, and Asn-188 are each glycosylated (N-linked (GlcNAc...) asparagine). The Extracellular segment spans residues 23 to 296; sequence SSQSLNFTYN…TSLQRFYKNR (274 aa). The tract at residues 26–263 is legume-lectin like; sequence SLNFTYNSFH…SEHFVFGWSF (238 aa). Residues 297 to 317 form a helical membrane-spanning segment; it reads MPLFSLLLIPVLFVVSLIFLV. Topologically, residues 318-674 are cytoplasmic; that stretch reads RFIVRRRRKF…IAYSIVSGGR (357 aa). The Protein kinase domain maps to 355-632; the sequence is FKDKDLLGSG…LQYLRGDATL (278 aa). ATP contacts are provided by residues 361-369 and Lys-384; that span reads LGSGGFGRV. Asp-480 functions as the Proton acceptor in the catalytic mechanism.

In the C-terminal section; belongs to the protein kinase superfamily. Ser/Thr protein kinase family. It in the N-terminal section; belongs to the leguminous lectin family.

It is found in the cell membrane. It carries out the reaction L-seryl-[protein] + ATP = O-phospho-L-seryl-[protein] + ADP + H(+). The enzyme catalyses L-threonyl-[protein] + ATP = O-phospho-L-threonyl-[protein] + ADP + H(+). This Arabidopsis thaliana (Mouse-ear cress) protein is L-type lectin-domain containing receptor kinase IV.3 (LECRK43).